The primary structure comprises 237 residues: 1-(5-phosphoribosyl)-5-[(5-phosphoribosylamino)methylideneamino] imidazole-4-carboxamide isomerase (237 aa).

Asp-8 functions as the Proton acceptor in the catalytic mechanism. The active-site Proton donor is Asp-129.

It belongs to the HisA/HisF family.

The protein localises to the cytoplasm. It carries out the reaction 1-(5-phospho-beta-D-ribosyl)-5-[(5-phospho-beta-D-ribosylamino)methylideneamino]imidazole-4-carboxamide = 5-[(5-phospho-1-deoxy-D-ribulos-1-ylimino)methylamino]-1-(5-phospho-beta-D-ribosyl)imidazole-4-carboxamide. It functions in the pathway amino-acid biosynthesis; L-histidine biosynthesis; L-histidine from 5-phospho-alpha-D-ribose 1-diphosphate: step 4/9. The polypeptide is 1-(5-phosphoribosyl)-5-[(5-phosphoribosylamino)methylideneamino] imidazole-4-carboxamide isomerase (Methanosphaera stadtmanae (strain ATCC 43021 / DSM 3091 / JCM 11832 / MCB-3)).